Here is an 859-residue protein sequence, read N- to C-terminus: Paladin (859 aa).

The segment at 1-34 (MGTTASTAQQTVSAGTSLEGLQGGSSSSMDSQHS) is disordered. Gly2 is lipidated: N-myristoyl glycine. Ser89 carries the phosphoserine modification.

The protein belongs to the paladin family. Vascular expression detected in the central nervous system, kidney, lung, heart, skeletal muscle, white adipose tissue (WAT), brown adipose tissue, liver, pancreas and spleen. Not expressed in all vessels: for instance, not expressed in capillaries in the brain, and expressed mainly in large vessels in the heart, WAT, liver, pancreas and kidney. Predominant nonvascular expression in myocardium and lung mesenchyme. In large vessels, primarily expressed by smooth muscle cells, but occasionally detected at low levels in the endothelium. Expressed in various cells of the hematopoietic lineage.

The protein localises to the cytoplasm. It localises to the cytosol. This is Paladin (Pald1) from Mus musculus (Mouse).